The following is a 218-amino-acid chain: Mediator of RNA polymerase II transcription subunit 20 (218 aa).

The protein belongs to the Mediator complex subunit 20 family. Component of the Mediator complex.

Its subcellular location is the nucleus. In terms of biological role, component of the Mediator complex, a coactivator involved in the regulated transcription of nearly all RNA polymerase II-dependent genes. Mediator functions as a bridge to convey information from gene-specific regulatory proteins to the basal RNA polymerase II transcription machinery. Mediator is recruited to promoters by direct interactions with regulatory proteins and serves as a scaffold for the assembly of a functional preinitiation complex with RNA polymerase II and the general transcription factors. The protein is Mediator of RNA polymerase II transcription subunit 20 (SRB2) of Yarrowia lipolytica (strain CLIB 122 / E 150) (Yeast).